We begin with the raw amino-acid sequence, 394 residues long: Putative gustatory receptor 22a (394 aa).

Over 1–16 (MSQPKRIHRICKGLAR) the chain is Cytoplasmic. The chain crosses the membrane as a helical span at residues 17-37 (FTIRATLYGSWVLGLFPFTFD). At 38 to 47 (SRKRRLNRSK) the chain is on the extracellular side. N44 is a glycosylation site (N-linked (GlcNAc...) asparagine). Residues 48–68 (WLLAYGLVLNLTLLVLSMLPS) form a helical membrane-spanning segment. Topologically, residues 69 to 148 (TDDHNSVKVE…HTFNRYVIEK (80 aa)) are cytoplasmic. The chain crosses the membrane as a helical span at residues 149–169 (GLVIILEIGSSLVLYFGIPNS). Position 170 (K170) is a topological domain, extracellular. Residues 171-191 (IVVYEAVCIYIVQLEVLMVVM) traverse the membrane as a helical segment. Residues 192-256 (HFHLAVIYIY…TAIYDIQVTL (65 aa)) are Cytoplasmic-facing. Residues 257 to 277 (FMATLFSVNIIVGHVLVICWI) form a helical membrane-spanning segment. N278 carries an N-linked (GlcNAc...) asparagine glycan. Over 278–281 (NITR) the chain is Extracellular. A helical membrane pass occupies residues 282-302 (FSLLVIFLLFPQALIINFWDL). Residues 303 to 361 (WQGIAFCDLAESTGKKTSMILKLFNDMENMDQETERRVTEFTLFCSHRRLKVCHLGLLD) are Cytoplasmic-facing. A helical transmembrane segment spans residues 362-382 (INYEMGFRMIITNILYVVFLV). Over 383–394 (QFDYMNLKFKTD) the chain is Extracellular.

This sequence belongs to the insect chemoreceptor superfamily. Gustatory receptor (GR) family. Gr22e subfamily. In terms of tissue distribution, expressed in neurons of the terminal external chemosensory organ of larvae.

The protein localises to the cell membrane. Its function is as follows. Probable gustatory receptor which mediates acceptance or avoidance behavior, depending on its substrates. In Drosophila melanogaster (Fruit fly), this protein is Putative gustatory receptor 22a (Gr22a).